A 146-amino-acid polypeptide reads, in one-letter code: Hemoglobin subunit beta (146 aa).

The 145-residue stretch at 2–146 folds into the Globin domain; the sequence is QWTAEEKQLI…VAHALARKYH (145 aa). 2 residues coordinate heme b: His-63 and His-92.

This sequence belongs to the globin family. In terms of assembly, heterotetramer of two alpha chains and two beta chains. In terms of tissue distribution, red blood cells.

Involved in oxygen transport from the lung to the various peripheral tissues. This is Hemoglobin subunit beta (HBB) from Sturnus vulgaris (Starling).